Consider the following 61-residue polypeptide: MAEAKTVTVRQTGSPIRREKDQRATLVGLGLNRVGRVSTLQDNPSTRGMIRKVQHLLEIVE.

It belongs to the universal ribosomal protein uL30 family. In terms of assembly, part of the 50S ribosomal subunit.

This is Large ribosomal subunit protein uL30 from Caulobacter vibrioides (strain ATCC 19089 / CIP 103742 / CB 15) (Caulobacter crescentus).